The primary structure comprises 913 residues: Chitin synthase 1 (913 aa).

The interval 1 to 135 is disordered; it reads MAYRGGGPND…QQPGAQTGGL (135 aa). A glycan (N-linked (GlcNAc...) asparagine) is linked at asparagine 25. Basic and acidic residues predominate over residues 41 to 56; that stretch reads RDPHARGTSPYEHHLG. Residue asparagine 539 is glycosylated (N-linked (GlcNAc...) asparagine). The next 7 membrane-spanning stretches (helical) occupy residues 566-586, 625-645, 658-678, 712-732, 740-760, 840-860, and 881-901; these read FFFHIQLIYNVLNVIFTWFSL, IINSILQYLYLAFLVIQFVLA, IASFIVFGFIQTYILVLSGYL, VILVALVTIYGLNFIASFMYL, SFPYYLVLMSTYINILMVYAF, TGLVVSWLFSNAALIVFITTD, and FLLYSTAVLALVRFTGFLWFL.

It belongs to the chitin synthase family. Class III subfamily.

The protein localises to the cell membrane. It catalyses the reaction [(1-&gt;4)-N-acetyl-beta-D-glucosaminyl](n) + UDP-N-acetyl-alpha-D-glucosamine = [(1-&gt;4)-N-acetyl-beta-D-glucosaminyl](n+1) + UDP + H(+). Functionally, polymerizes chitin, a structural polymer of the cell wall and septum, by transferring the sugar moiety of UDP-GlcNAc to the non-reducing end of the growing chitin polymer. Plays a role in cell wall integrity and is involved in tolerance to hyperosmotic conditions. Required to successfully penetrate the host plants and thus plays a key role in pathogenicity. This chain is Chitin synthase 1, found in Verticillium dahliae (strain VdLs.17 / ATCC MYA-4575 / FGSC 10137) (Verticillium wilt).